The primary structure comprises 337 residues: DNA-directed RNA polymerase subunit alpha (337 aa).

The segment at Met1–Lys233 is alpha N-terminal domain (alpha-NTD). The interval Phe249–Tyr337 is alpha C-terminal domain (alpha-CTD).

Belongs to the RNA polymerase alpha chain family. In terms of assembly, homodimer. The RNAP catalytic core consists of 2 alpha, 1 beta, 1 beta' and 1 omega subunit. When a sigma factor is associated with the core the holoenzyme is formed, which can initiate transcription.

The enzyme catalyses RNA(n) + a ribonucleoside 5'-triphosphate = RNA(n+1) + diphosphate. In terms of biological role, DNA-dependent RNA polymerase catalyzes the transcription of DNA into RNA using the four ribonucleoside triphosphates as substrates. The sequence is that of DNA-directed RNA polymerase subunit alpha from Bartonella bacilliformis (strain ATCC 35685 / KC583 / Herrer 020/F12,63).